A 400-amino-acid chain; its full sequence is Cysteine desulfurase (400 aa).

Residues 72-73 (GT), asparagine 152, glutamine 180, and 200-202 (SGH) each bind pyridoxal 5'-phosphate. Lysine 203 is subject to N6-(pyridoxal phosphate)lysine. Threonine 238 serves as a coordination point for pyridoxal 5'-phosphate. Residue cysteine 326 is the Cysteine persulfide intermediate of the active site. Cysteine 326 serves as a coordination point for [2Fe-2S] cluster.

It belongs to the class-V pyridoxal-phosphate-dependent aminotransferase family. NifS/IscS subfamily. Homodimer. Pyridoxal 5'-phosphate serves as cofactor.

It catalyses the reaction (sulfur carrier)-H + L-cysteine = (sulfur carrier)-SH + L-alanine. In terms of biological role, catalyzes the removal of elemental sulfur atoms from cysteine to produce alanine. Seems to participate in the biosynthesis of the nitrogenase metalloclusters by providing the inorganic sulfur required for the Fe-S core formation. The polypeptide is Cysteine desulfurase (Gluconacetobacter diazotrophicus (strain ATCC 49037 / DSM 5601 / CCUG 37298 / CIP 103539 / LMG 7603 / PAl5)).